The sequence spans 50 residues: Kappa-actitoxin-Bcs4a (50 aa).

It belongs to the sea anemone type 5 potassium channel toxin family. In terms of processing, contains 4 disulfide bonds.

The protein localises to the secreted. Its subcellular location is the nematocyst. Functionally, inhibits voltage-gated potassium channels (Kv1/KCNA). Is potent on Drosophila Shaker IR channels (IC(50)=94.25 nM), and rKv1.2/KCNA2 (IC(50)=172.59 nM), and moderately active on hKv1.3/KCNA3 (IC(50)=1006.48 nM), rKv1.6/KCNA6 (IC(50)=2245.93 nM), and Kv1.1/KCNA1 (IC(50) around 3 uM). In vivo, induces a rapid increase in swimming speed on zebrafish larvae, as well as death which occurs between 2 and 18 hours later. Also paralyzes swimming crabs (C.danae) when injected at the junction between the body and the walking leg. The chain is Kappa-actitoxin-Bcs4a from Bunodosoma caissarum (Sea anemone).